The primary structure comprises 317 residues: Protein phosphatase PTC7 homolog fig (317 aa).

Residues 46 to 312 enclose the PPM-type phosphatase domain; that stretch reads PYLVTVVQGR…DDITLILASV (267 aa). Positions 90, 91, and 235 each coordinate Mn(2+).

This sequence belongs to the PP2C family. The cofactor is Mg(2+). Mn(2+) serves as cofactor.

The catalysed reaction is O-phospho-L-seryl-[protein] + H2O = L-seryl-[protein] + phosphate. The enzyme catalyses O-phospho-L-threonyl-[protein] + H2O = L-threonyl-[protein] + phosphate. The chain is Protein phosphatase PTC7 homolog fig from Drosophila erecta (Fruit fly).